The sequence spans 144 residues: Histone H3.1 (144 aa).

The interval 1–45 is disordered; the sequence is MARTKQSARKTTGGKAPRKQLSAKSARKGVSPASSAGAKKSRYRP. The residue at position 5 (lysine 5) is an N6,N6,N6-trimethyllysine; alternate. Residue lysine 5 is modified to N6,N6-dimethyllysine; alternate. An N6-methyllysine; alternate mark is found at lysine 5 and lysine 10. An N6-acetyllysine; alternate mark is found at lysine 10, lysine 15, lysine 19, lysine 24, lysine 28, and lysine 39. Residue lysine 15 is modified to N6,N6-dimethyllysine; alternate. 4 positions are modified to N6-methyllysine; alternate: lysine 19, lysine 24, lysine 28, and lysine 39. Lysine 28 and lysine 39 each carry N6,N6,N6-trimethyllysine; alternate. Residues lysine 28 and lysine 39 each carry the N6,N6-dimethyllysine; alternate modification. At lysine 58 the chain carries N6-acetyllysine.

It belongs to the histone H3 family. As to quaternary structure, the nucleosome is a histone octamer containing two molecules each of H2A, H2B, H3 and H4 assembled in one H3-H4 heterotetramer and two H2A-H2B heterodimers. The octamer wraps approximately 147 bp of DNA. Post-translationally, mono-, di- and trimethylated to form H3K4me1/2/3. H3K4me activates gene expression by regulating transcription elongation and plays a role in telomere length maintenance. H3K4me enrichment correlates with transcription levels, and occurs in a 5' to 3' gradient with H3K4me3 enrichment at the 5'-end of genes, shifting to H3K4me2 and then H3K4me1. H3K36me represses gene expression. Acetylation of histone H3 leads to transcriptional activation.

The protein resides in the nucleus. It is found in the chromosome. Functionally, core component of nucleosome. Nucleosomes wrap and compact DNA into chromatin, limiting DNA accessibility to the cellular machineries which require DNA as a template. Histones thereby play a central role in transcription regulation, DNA repair, DNA replication and chromosomal stability. DNA accessibility is regulated via a complex set of post-translational modifications of histones, also called histone code, and nucleosome remodeling. This is Histone H3.1 (HHT1) from Encephalitozoon cuniculi (strain GB-M1) (Microsporidian parasite).